Here is a 142-residue protein sequence, read N- to C-terminus: Protein E6 (142 aa).

2 zinc fingers span residues 31–67 (CIWC…CAFC) and 104–140 (CAIC…CTQC).

This sequence belongs to the papillomaviridae E6 protein family. In terms of assembly, forms homodimers. Interacts with ubiquitin-protein ligase UBE3A/E6-AP; this interaction stimulates UBE3A ubiquitin activity. Interacts with host TP53 and EP300; this interaction inhibits TP53 activity.

It localises to the host cytoplasm. It is found in the host nucleus. Its function is as follows. Plays a major role in the induction and maintenance of cellular transformation. E6 associates with host UBE3A/E6-AP ubiquitin-protein ligase and modulates its activity. Sequesters tumor suppressor TP53 in the host cytoplasm and modulates its activity by interacting with host EP300 that results in the reduction of TP53 acetylation and activation. In turn, apoptosis induced by DNA damage is inhibited. E6 also protects host keratinocytes from apoptosis by mediating the degradation of host BAK1. May also inhibit host immune response. The sequence is that of Protein E6 from Homo sapiens (Human).